The sequence spans 209 residues: Uracil phosphoribosyltransferase (209 aa).

Residues R79, R104, and 131-139 (DPMLATGVS) contribute to the 5-phospho-alpha-D-ribose 1-diphosphate site. Residues I194 and 199-201 (GDA) each bind uracil. D200 lines the 5-phospho-alpha-D-ribose 1-diphosphate pocket.

It belongs to the UPRTase family. It depends on Mg(2+) as a cofactor.

It catalyses the reaction UMP + diphosphate = 5-phospho-alpha-D-ribose 1-diphosphate + uracil. It participates in pyrimidine metabolism; UMP biosynthesis via salvage pathway; UMP from uracil: step 1/1. Its activity is regulated as follows. Allosterically activated by GTP. Functionally, catalyzes the conversion of uracil and 5-phospho-alpha-D-ribose 1-diphosphate (PRPP) to UMP and diphosphate. The sequence is that of Uracil phosphoribosyltransferase from Thermotoga petrophila (strain ATCC BAA-488 / DSM 13995 / JCM 10881 / RKU-1).